We begin with the raw amino-acid sequence, 528 residues long: MQTVHEMLRRAVSRVPHRWAIVDAARSTFDICRTGETSRNEGSATARLWPQPARPLAVVSGNSVEAVIAVLALHRLQAVPALMNPRLKPAEISELVARGEMARAVVANDAGVMEAIRTRVPSVCVLALDDLVSGSRVPEVAGKSLPPPPCEPEQAGFVFYTSGTTGLPKGAVIPQRAAESRVLFMATQAGLRHGSHNVVLGLMPLYHTIGFFAVLVAAMAFDGTYVVVEEFDAGNVLKLIERERVTAMFATPTHLDALTTAVEQAGARLESLEHVTFAGATMPDTVLERVNRFIPGEKVNIYGTTEAMNSLYMRAVRIAGTVMRPGFFSEVRIVRVGGDVDDGCPTVKRASWRWRRRMRPFQATLTNLRLLQKSFRKAGTGRAICVRDGSGNIVVLGRVDDMIISGGENIHPSEVERILAAAPGVAEVVVIGVKDERWGQSVVACVVLQPGASASAERLDAFCRASALADFKRPRRYVFLDELPKSAMNKVLRRQLMQHVSATSSAAVVPAPAVKQRTYAPSGRAIAR.

Residues 161 to 169 (TSGTTGLPK), 300 to 305 (NIYGTT), and N409 each bind ATP.

The protein belongs to the ATP-dependent AMP-binding enzyme family. Homodimer. Mg(2+) serves as cofactor.

The enzyme catalyses 4-chlorobenzoate + ATP + CoA = 4-chlorobenzoyl-CoA + AMP + diphosphate. The protein operates within xenobiotic degradation; 4-chlorobenzoate degradation; 4-hydroxybenzoate from 4-chlorobenzoate: step 2/3. Its activity is regulated as follows. Unaffected by 5,5'-dithiobis-(2-nitrobenzoic acid), 4-chloromercuribenzoate and sodium azide. Inhibited by Cu(2+), Fe(2+) and Zn(2+). Unaffected by Na(+), K(+) and Li(+). Functionally, catalyzes the formation of chlorobenzoyl-CoA via a 2 step reaction. First 4-chlorobenzoyl is adenylated by ATP, followed by acyl transfer from the 4-chlorobenzoyl-AMP intermediate to CoA. Benzoate, 4-bromobenzoate, 4-iodobenzoate and 4-methylbenzoate also act as substrates. Inactive towards 4-aminobenzoate, 4-hydroxybenzoate, 2-aminobenzoate, 2,3-dihydroxybenzoate, 4-coumarate and the aliphatic carboxylic acids palmate, caproate, laurate and butyrate. Negligible activity is detected when ATP is replaced by UTP, CTP or GTP as cosubstrate. This Pseudomonas sp. (strain CBS-3) protein is 4-chlorobenzoate--CoA ligase.